We begin with the raw amino-acid sequence, 233 residues long: Protein YIPF6 (233 aa).

Residues 1–84 (MAETEGFGDS…PKKSTTLLRD (84 aa)) lie on the Cytoplasmic side of the membrane. A helical transmembrane segment spans residues 85 to 105 (WDLWGPLVLCVSLALMLQGGN). At 106–111 (ADSKDD) the chain is on the lumenal side. A helical transmembrane segment spans residues 112–132 (GGPQFAEVFVIIWFGAVVITL). Topologically, residues 133-142 (NSKLLGGTIS) are cytoplasmic. Residues 143 to 163 (FFQSLCVLGYCILPLTVAMLV) traverse the membrane as a helical segment. At 164-180 (CRLVLLLSHTTASFIVR) the chain is on the lumenal side. A helical transmembrane segment spans residues 181–201 (LVVVTVMFAWSTFASTAFLAD). The Cytoplasmic segment spans residues 202 to 208 (SQPPNRR). Residues 209–229 (ALAVYPIFLFYFVISWMVLTF) form a helical membrane-spanning segment. The Lumenal segment spans residues 230–233 (NTVS).

The protein belongs to the YIP1 family.

It localises to the golgi apparatus membrane. This Xenopus tropicalis (Western clawed frog) protein is Protein YIPF6 (yipf6).